The sequence spans 359 residues: Non-classical arabinogalactan protein 31 (359 aa).

An N-terminal signal peptide occupies residues 1-24; sequence MGFIGKSVLVSLVALWCFTSSVFT. The segment at 31–215 is disordered; the sequence is TQTPSLAPAP…PPVSPPTKPP (185 aa). Over residues 44-66 the composition is skewed to basic residues; sequence HHGHHHPHPPHHHHPHPHPHPHP. Over residues 67-215 the composition is skewed to pro residues; that stretch reads PAKSPVKPPV…PPVSPPTKPP (149 aa). Residues Pro71, Pro75, Pro79, Pro82, Pro83, Pro87, Pro91, Pro95, Pro99, Pro103, Pro107, Pro111, Pro114, Pro115, Pro119, Pro123, Pro127, Pro131, Pro135, Pro139, Pro143, Pro147, Pro151, Pro155, Pro159, Pro163, Pro167, Pro171, Pro175, Pro179, Pro183, Pro186, Pro187, Pro191, Pro195, Pro199, Pro203, Pro207, Pro210, Pro211, Pro215, and Pro219 each carry the 4-hydroxyproline modification. O-linked (Ara...) hydroxyproline glycans are attached at residues Pro71, Pro75, Pro79, Pro82, Pro83, Pro87, Pro91, Pro95, Pro99, Pro103, Pro107, Pro111, Pro114, Pro115, Pro119, Pro123, Pro127, Pro131, Pro135, Pro139, Pro143, Pro147, Pro151, Pro155, Pro159, Pro163, Pro167, Pro171, Pro175, Pro179, Pro183, Pro186, Pro187, Pro191, Pro195, Pro199, Pro203, Pro207, Pro210, Pro211, Pro215, and Pro219. Copy 1 of the repeat occupies 90–109; that stretch reads PPVYPPTKAPVKPPTKPPVK. Tandem repeats lie at residues 122 to 141, 142 to 161, and 162 to 181. N-linked (GlcNAc...) asparagine glycans are attached at residues Asn226 and Asn269.

The protein belongs to the non-classical AGP family. Hydroxylated on numerous prolines in the proline-rich region. Post-translationally, O-glycosylated on numerous hydroxyprolines in the proline-rich region; noncontiguous hydroxylproline residues are glycosylated with arabinogalactan. As to expression, expressed in vascular bundles of roots, leaves, sepals and stamen filaments, and pistils but not stigma.

It localises to the secreted. The protein localises to the cell wall. Proteoglycan that may contribute to the strengthening of cell walls. The sequence is that of Non-classical arabinogalactan protein 31 from Arabidopsis thaliana (Mouse-ear cress).